Here is a 383-residue protein sequence, read N- to C-terminus: Izumo sperm-egg fusion protein 1 (383 aa).

An N-terminal signal peptide occupies residues 1-21 (MGLHFTLLLAALANCLCPARL). Disulfide bonds link Cys22–Cys149, Cys25–Cys152, Cys135–Cys159, Cys139–Cys165, and Cys182–Cys233. Topologically, residues 22-306 (CIICDPFVVA…HRPEKKLKSR (285 aa)) are extracellular. Positions 148–160 (WCNKCEKQMHFCR) are important for interaction with IZUMO1R. The Ig-like C2-type domain maps to 167–251 (ERQIEVHRLE…PATIIYYHVT (85 aa)). N-linked (GlcNAc...) asparagine glycosylation is present at Asn204. The chain crosses the membrane as a helical span at residues 307 to 327 (LLILLILGFVVLVASVIASVL). The Cytoplasmic segment spans residues 328–383 (HFRKTRVKSKNSNVENKTSAAEFKSEAESPQKMGSRKLSQAEFHTDSSDKVEEADN). A disordered region spans residues 335–383 (KSKNSNVENKTSAAEFKSEAESPQKMGSRKLSQAEFHTDSSDKVEEADN). The segment covering 337 to 346 (KNSNVENKTS) has biased composition (polar residues). A phosphoserine mark is found at Ser339, Ser346, and Ser366. Positions 370 to 383 (FHTDSSDKVEEADN) are enriched in basic and acidic residues. A Phosphothreonine modification is found at Thr372.

This sequence belongs to the Izumo family. As to quaternary structure, monomer, homodimer; disulfide-linked and homooligomer; depending on the context. Interacts with IZUMO1R/JUNO. IZUMO1 and IZUMO1R/JUNO form a complex with 1:1 stoichiometry. In gamete recognition, IZUMO1R/JUNO first binds to monomeric IZUMO1. The weak, but specific interaction with IZUMO1R/JUNO induces IZUMO1 homodimerization. The process follows a tight binding phase where IZUMO1 bends the entire structure towards the sperm membrane side through a thiol-disulfide exchange reaction. The molecule no longer binds to IZUMO1R/JUNO and instead binds to a putative second oocyte receptor. Interacts with ACE3. Part of a oolemmal binding multimeric complex (IZUMO1 complex) composed at least of IZUMO1 and GLIPR1L1; the complex assemblage is influenced by the maturation status of the male germ cell. Interacts with GLIPR1L1. Interacts with FREY; the interaction retains IZUMO1 at the endoplasmic reticulum membrane and coordinates IZUMO1 complex assembly. Interacts with WDR54. Forms a complex with SPACA6 and TMEM81 on spermatocyte cell membrane. N-glycosylated. Glycosylation is not essential for fusion and for proper protein trafficking in sperm. Post-translationally, phosphorylated. The cytoplasmic C-terminus is phosphorylated and undergoes phosphorylation changes during epididymal transit. Expressed in sperm (at protein level).

The protein localises to the cell membrane. The protein resides in the cytoplasmic vesicle. It is found in the secretory vesicle. Its subcellular location is the acrosome membrane. Essential sperm cell-surface protein required for fertilization by acting as a ligand for IZUMO1R/JUNO receptor on egg. The IZUMO1:IZUMO1R/JUNO interaction is a necessary adhesion event between sperm and egg that is required for fertilization but is not sufficient for cell fusion. The ligand-receptor interaction probably does not act as a membrane 'fusogen'. Plays a critical role in sperm-oolemma binding prior to plasma membrane fusion. Can mediate cell-cell fusion in cultured mammalian cells independently of its binding to IZUMO1R/JUNO. In Rattus norvegicus (Rat), this protein is Izumo sperm-egg fusion protein 1.